Reading from the N-terminus, the 255-residue chain is Imidazole glycerol phosphate synthase subunit HisF (255 aa).

Active-site residues include Asp12 and Asp131.

It belongs to the HisA/HisF family. Heterodimer of HisH and HisF.

It localises to the cytoplasm. The catalysed reaction is 5-[(5-phospho-1-deoxy-D-ribulos-1-ylimino)methylamino]-1-(5-phospho-beta-D-ribosyl)imidazole-4-carboxamide + L-glutamine = D-erythro-1-(imidazol-4-yl)glycerol 3-phosphate + 5-amino-1-(5-phospho-beta-D-ribosyl)imidazole-4-carboxamide + L-glutamate + H(+). Its pathway is amino-acid biosynthesis; L-histidine biosynthesis; L-histidine from 5-phospho-alpha-D-ribose 1-diphosphate: step 5/9. Its function is as follows. IGPS catalyzes the conversion of PRFAR and glutamine to IGP, AICAR and glutamate. The HisF subunit catalyzes the cyclization activity that produces IGP and AICAR from PRFAR using the ammonia provided by the HisH subunit. The protein is Imidazole glycerol phosphate synthase subunit HisF of Neisseria meningitidis serogroup C / serotype 2a (strain ATCC 700532 / DSM 15464 / FAM18).